Here is a 404-residue protein sequence, read N- to C-terminus: NADH-quinone oxidoreductase subunit D 2 (404 aa).

It belongs to the complex I 49 kDa subunit family. As to quaternary structure, NDH-1 is composed of 14 different subunits. Subunits NuoB, C, D, E, F, and G constitute the peripheral sector of the complex.

The protein localises to the cell inner membrane. The enzyme catalyses a quinone + NADH + 5 H(+)(in) = a quinol + NAD(+) + 4 H(+)(out). Functionally, NDH-1 shuttles electrons from NADH, via FMN and iron-sulfur (Fe-S) centers, to quinones in the respiratory chain. The immediate electron acceptor for the enzyme in this species is believed to be ubiquinone. Couples the redox reaction to proton translocation (for every two electrons transferred, four hydrogen ions are translocated across the cytoplasmic membrane), and thus conserves the redox energy in a proton gradient. This chain is NADH-quinone oxidoreductase subunit D 2, found in Sinorhizobium medicae (strain WSM419) (Ensifer medicae).